The sequence spans 217 residues: Probable transaldolase (217 aa).

Lys-83 (schiff-base intermediate with substrate) is an active-site residue.

Belongs to the transaldolase family. Type 3B subfamily.

It localises to the cytoplasm. The enzyme catalyses D-sedoheptulose 7-phosphate + D-glyceraldehyde 3-phosphate = D-erythrose 4-phosphate + beta-D-fructose 6-phosphate. It participates in carbohydrate degradation; pentose phosphate pathway; D-glyceraldehyde 3-phosphate and beta-D-fructose 6-phosphate from D-ribose 5-phosphate and D-xylulose 5-phosphate (non-oxidative stage): step 2/3. Its function is as follows. Transaldolase is important for the balance of metabolites in the pentose-phosphate pathway. This chain is Probable transaldolase, found in Bartonella bacilliformis (strain ATCC 35685 / KC583 / Herrer 020/F12,63).